The chain runs to 447 residues: Elongation factor 1-alpha (447 aa).

Residues 5 to 230 (KIHISIVVIG…DQISEPKRPS (226 aa)) form the tr-type G domain. The segment at 14–21 (GHVDSGKS) is G1. 14–21 (GHVDSGKS) contributes to the GTP binding site. Lys-55 bears the N6,N6-dimethyllysine mark. The G2 stretch occupies residues 70–74 (GITID). Position 79 is an N6,N6,N6-trimethyllysine (Lys-79). Residues 91–94 (DAPG) form a G3 region. GTP contacts are provided by residues 91 to 95 (DAPGH) and 153 to 156 (NKMD). Residues 153–156 (NKMD) are G4. Lys-187 carries the N6,N6,N6-trimethyllysine modification. A G5 region spans residues 194-196 (SGF). Lys-261 carries the N6-methyllysine modification. 5-glutamyl glycerylphosphorylethanolamine is present on Glu-289. Lys-306 carries the N6,N6,N6-trimethyllysine modification. At Glu-362 the chain carries 5-glutamyl glycerylphosphorylethanolamine. An N6,N6,N6-trimethyllysine modification is found at Lys-396.

This sequence belongs to the TRAFAC class translation factor GTPase superfamily. Classic translation factor GTPase family. EF-Tu/EF-1A subfamily.

Its subcellular location is the cytoplasm. This protein promotes the GTP-dependent binding of aminoacyl-tRNA to the A-site of ribosomes during protein biosynthesis. The polypeptide is Elongation factor 1-alpha (Daucus carota (Wild carrot)).